We begin with the raw amino-acid sequence, 414 residues long: Lysosome-associated membrane glycoprotein 1 (414 aa).

The first 18 residues, 1 to 18, serve as a signal peptide directing secretion; sequence MGGAARAVLLGFLQASSS. Residues 19–181 form a first lumenal domain region; sequence FDVRDSTGKV…SANKTECRED (163 aa). The Lumenal segment spans residues 19 to 379; sequence FDVRDSTGKV…EECQLDENNM (361 aa). Cysteines 29 and 67 form a disulfide. N-linked (GlcNAc...) asparagine glycosylation is found at N33, N58, N71, N90, N108, N117, N154, N159, N168, and N174. The cysteines at positions 142 and 178 are disulfide-linked. Positions 182 to 224 are hinge; sequence MVSTTTVAPTTPKHATSQVPTTSPAPTAAPSSPAVGKYNVTGA. Residues 186 to 213 form a disordered region; the sequence is TTVAPTTPKHATSQVPTTSPAPTAAPSS. A compositionally biased stretch (low complexity) spans 196-213; the sequence is ATSQVPTTSPAPTAAPSS. N-linked (GlcNAc...) asparagine glycosylation is found at N220, N225, N238, N259, N289, N301, and N319. Positions 225–379 are second lumenal domain; that stretch reads NGTCVLASMG…EECQLDENNM (155 aa). The cysteines at positions 228 and 266 are disulfide-linked. C335 and C372 are disulfide-bonded. The chain crosses the membrane as a helical span at residues 380–403; the sequence is LIPIIVGAALAGLVLIVLIAYLIG. The Cytoplasmic portion of the chain corresponds to 404–414; sequence RKRSHAGYQTI.

The protein belongs to the LAMP family.

It localises to the lysosome membrane. Its subcellular location is the endosome membrane. It is found in the late endosome membrane. The protein localises to the cell membrane. The protein resides in the cytolytic granule membrane. Lysosomal membrane glycoprotein which plays an important role in lysosome biogenesis, lysosomal pH regulation, autophagy and cholesterol homeostasis. In terms of biological role, (Microbial infection) Plays an essential role in efficient replication and spread of Marek's disease virus, by facilitating viral cell-to-cell spread. This is Lysosome-associated membrane glycoprotein 1 (LAMP1) from Gallus gallus (Chicken).